We begin with the raw amino-acid sequence, 494 residues long: Probable capsid protein (494 aa).

The short motif at 120–123 (RPKR) is the Nuclear localization signal element. A CCHC-type zinc finger spans residues 418-435 (CRCWVCNIEGHYANECPN). The tract at residues 474 to 494 (LSSSDSELDDTCEESSSEESE) is disordered. Residues 479 to 494 (SELDDTCEESSSEESE) show a composition bias toward acidic residues.

The protein belongs to the caulimoviridae capsid protein family. In terms of assembly, interacts (via nuclear localization signal) with host importin alpha.

The protein localises to the virion. It localises to the host nucleus. Self assembles to form an icosahedral capsid, about 50 nm in diameter, nm, composed of 420 subunits of the viral capsid protein. The capsid encapsulates the genomic dsDNA. Following virus entry into host cell, provides nuclear import of the viral genome. Virus particles do not enter the nucleus, but dock at the nuclear membrane through the interaction with host importins. The protein is Probable capsid protein of Dianthus caryophyllus (Carnation).